We begin with the raw amino-acid sequence, 127 residues long: Protein translocase subunit SecE (127 aa).

3 consecutive transmembrane segments (helical) span residues 16-36 (IAKWSFLGILIILFILSNHYY), 42-62 (IFQNILLTSLTILSTGLIFLT), and 98-118 (IIVTILLALILWGLDNILIWF).

The protein belongs to the SecE/SEC61-gamma family. In terms of assembly, component of the Sec protein translocase complex. Heterotrimer consisting of SecY, SecE and SecG subunits. The heterotrimers can form oligomers, although 1 heterotrimer is thought to be able to translocate proteins. Interacts with the ribosome. Interacts with SecDF, and other proteins may be involved. Interacts with SecA.

The protein localises to the cell membrane. Functionally, essential subunit of the Sec protein translocation channel SecYEG. Clamps together the 2 halves of SecY. May contact the channel plug during translocation. In Buchnera aphidicola subsp. Baizongia pistaciae (strain Bp), this protein is Protein translocase subunit SecE.